The chain runs to 112 residues: Cell cycle protein GpsB (112 aa).

A coiled-coil region spans residues 42 to 77 (YQKMADMNNEVVKLSEENHKLKKELEELRLRVATSR). A disordered region spans residues 74–96 (ATSRPQDNKNFSSNNSSSASNNV). A compositionally biased stretch (low complexity) spans 81–95 (NKNFSSNNSSSASNN).

Belongs to the GpsB family. In terms of assembly, forms polymers through the coiled coil domains. Interacts with PBP1, MreC and EzrA.

The protein localises to the cytoplasm. Divisome component that associates with the complex late in its assembly, after the Z-ring is formed, and is dependent on DivIC and PBP2B for its recruitment to the divisome. Together with EzrA, is a key component of the system that regulates PBP1 localization during cell cycle progression. Its main role could be the removal of PBP1 from the cell pole after pole maturation is completed. Also contributes to the recruitment of PBP1 to the division complex. Not essential for septum formation. The polypeptide is Cell cycle protein GpsB (Staphylococcus epidermidis (strain ATCC 12228 / FDA PCI 1200)).